The primary structure comprises 109 residues: Small ribosomal subunit protein uS17 (109 aa).

The protein belongs to the universal ribosomal protein uS17 family. Part of the 30S ribosomal subunit.

Functionally, one of the primary rRNA binding proteins, it binds specifically to the 5'-end of 16S ribosomal RNA. This is Small ribosomal subunit protein uS17 from Methanococcus vannielii.